A 150-amino-acid polypeptide reads, in one-letter code: Large ribosomal subunit protein bL9 (150 aa).

It belongs to the bacterial ribosomal protein bL9 family.

Binds to the 23S rRNA. This Variovorax paradoxus (strain S110) protein is Large ribosomal subunit protein bL9.